A 374-amino-acid polypeptide reads, in one-letter code: Translocating chain-associated membrane protein 1 (374 aa).

At 1–32 (MAIRKKSNKNPPVLSHEFVLQNHADIVSCLAM) the chain is on the cytoplasmic side. A helical membrane pass occupies residues 33 to 53 (LFLLGLMFEITAKGAIIFVAL). Residues 54-81 (QYNVTRPATEEQAAESASLYYYGIKDLA) are Lumenal-facing. Asparagine 56 carries an N-linked (GlcNAc...) asparagine glycan. Residues 82–102 (TVFFYMLVAIIVHAIIQEYVL) traverse the membrane as a helical segment. Residues 103 to 121 (DKINRRMHFSKTKHSKFNE) are Cytoplasmic-facing. Residues 117-326 (SKFNESGQLS…NFQLRRWREH (210 aa)) form the TLC domain. A helical transmembrane segment spans residues 122–142 (SGQLSAFYLFACVWGTFILVS). Over 143-159 (ENYISDPTILWRAYPHN) the chain is Lumenal. A helical membrane pass occupies residues 160-180 (LMTFQMKFFYISQLAYWLHAF). At 181–192 (PELYFQKTKKED) the chain is on the cytoplasmic side. The chain crosses the membrane as a helical span at residues 193–213 (IPRQLVYIGLYLFHIAGAYLL). A topological domain (lumenal) is located at residue asparagine 214. The helical transmembrane segment at 215-235 (LNHLGLVLLVLHYFVEFLFHI) threads the bilayer. Residues 236–251 (SRLFYFSDEKYQKGFS) lie on the Cytoplasmic side of the membrane. A helical transmembrane segment spans residues 252 to 272 (LWAVLFVLGRLLTLILSVLTV). Over 273–297 (GFGLARAENQKLDFSTGNFNVLAVR) the chain is Lumenal. A helical transmembrane segment spans residues 298–318 (IAVLASICITQAFMMWKFINF). At 319–374 (QLRRWREHSAFQAPPVKRKPAVTKGRSSRKGTENGVNGTVTSNGADSPRSRKEKSS) the chain is on the cytoplasmic side. Residues 333–374 (PVKRKPAVTKGRSSRKGTENGVNGTVTSNGADSPRSRKEKSS) are disordered. Positions 334–347 (VKRKPAVTKGRSSR) are enriched in basic residues. Over residues 352-363 (NGVNGTVTSNGA) the composition is skewed to polar residues. Serine 365 is modified (phosphoserine).

This sequence belongs to the TRAM family. In terms of assembly, interacts with SEC61B. May interact with Derlin-1/DERL1. Post-translationally, N-glycosylated.

It is found in the endoplasmic reticulum membrane. Its function is as follows. Involved in the translocation of nascent protein chains into or through the endoplasmic reticulum (ER) membrane by facilitating the proper chain positioning at the SEC61 channel. Regulates the exposure of nascent secretory protein chain to the cytosol during translocation into the ER. May affect the phospholipid bilayer in the vicinity of the lateral gate of the SEC61 channel, thereby facilitating ER protein transport. Intimately associates with transmembrane (TM) domain of nascent membrane proteins during the entire integration process into the ER membrane. Associates with the second TM domain of G-protein-coupled receptor opsin/OPSD nascent chain in the ER membrane, which may facilitate its integration into the membrane. Under conditions of ER stress, participates in the disposal of misfolded ER membrane proteins during the unfolded protein response (UPR), an integrated stress response (ISR) pathway, by selectively retrotranslocating misfolded ER-membrane proteins from the ER into the cytosol where they are ubiquitinated and degraded by the proteasome. The protein is Translocating chain-associated membrane protein 1 of Rattus norvegicus (Rat).